A 155-amino-acid chain; its full sequence is UPF0266 membrane protein LMHCC_1856 (155 aa).

A run of 3 helical transmembrane segments spans residues Ile-8–Ile-28, Arg-46–Phe-66, and Pro-70–Phe-90.

This sequence belongs to the UPF0266 family.

It is found in the cell membrane. The protein is UPF0266 membrane protein LMHCC_1856 of Listeria monocytogenes serotype 4a (strain HCC23).